The following is a 449-amino-acid chain: Adenylosuccinate synthetase (449 aa).

Residues Gly-12–Lys-18 and Gly-40–Thr-42 contribute to the GTP site. Catalysis depends on Asp-13, which acts as the Proton acceptor. Mg(2+)-binding residues include Asp-13 and Gly-40. IMP-binding positions include Asp-13–Lys-16, Asn-38–His-41, Thr-128, Arg-142, Gln-223, Thr-238, and Arg-302. The active-site Proton donor is the His-41. Thr-298–Arg-304 is a binding site for substrate. GTP contacts are provided by residues Arg-304, Lys-330–Asp-332, and Ser-412–Gly-414.

Belongs to the adenylosuccinate synthetase family. As to quaternary structure, homodimer. Requires Mg(2+) as cofactor.

It localises to the cytoplasm. The enzyme catalyses IMP + L-aspartate + GTP = N(6)-(1,2-dicarboxyethyl)-AMP + GDP + phosphate + 2 H(+). It participates in purine metabolism; AMP biosynthesis via de novo pathway; AMP from IMP: step 1/2. Its function is as follows. Plays an important role in the de novo pathway of purine nucleotide biosynthesis. Catalyzes the first committed step in the biosynthesis of AMP from IMP. This chain is Adenylosuccinate synthetase, found in Gloeothece citriformis (strain PCC 7424) (Cyanothece sp. (strain PCC 7424)).